The primary structure comprises 248 residues: 2,3-bisphosphoglycerate-dependent phosphoglycerate mutase (248 aa).

Substrate contacts are provided by residues 8–15, 21–22, Arg60, 87–90, Lys98, 114–115, and 183–184; these read RHGESTWN, TG, ERHY, RR, and GN. His9 acts as the Tele-phosphohistidine intermediate in catalysis. Catalysis depends on Glu87, which acts as the Proton donor/acceptor.

This sequence belongs to the phosphoglycerate mutase family. BPG-dependent PGAM subfamily. In terms of assembly, homodimer.

It carries out the reaction (2R)-2-phosphoglycerate = (2R)-3-phosphoglycerate. The protein operates within carbohydrate degradation; glycolysis; pyruvate from D-glyceraldehyde 3-phosphate: step 3/5. Functionally, catalyzes the interconversion of 2-phosphoglycerate and 3-phosphoglycerate. The polypeptide is 2,3-bisphosphoglycerate-dependent phosphoglycerate mutase (Ralstonia nicotianae (strain ATCC BAA-1114 / GMI1000) (Ralstonia solanacearum)).